The sequence spans 55 residues: MPQLNPSPWFFIMLTTWLTFSLIIQPKLLSFTPTNPPSNKISTTTKTTPWTWPWT.

Residues 7-24 (SPWFFIMLTTWLTFSLII) form a helical membrane-spanning segment.

This sequence belongs to the ATPase protein 8 family. As to quaternary structure, component of the ATP synthase complex composed at least of ATP5F1A/subunit alpha, ATP5F1B/subunit beta, ATP5MC1/subunit c (homooctomer), MT-ATP6/subunit a, MT-ATP8/subunit 8, ATP5ME/subunit e, ATP5MF/subunit f, ATP5MG/subunit g, ATP5MK/subunit k, ATP5MJ/subunit j, ATP5F1C/subunit gamma, ATP5F1D/subunit delta, ATP5F1E/subunit epsilon, ATP5PF/subunit F6, ATP5PB/subunit b, ATP5PD/subunit d, ATP5PO/subunit OSCP. ATP synthase complex consists of a soluble F(1) head domain (subunits alpha(3) and beta(3)) - the catalytic core - and a membrane F(0) domain - the membrane proton channel (subunits c, a, 8, e, f, g, k and j). These two domains are linked by a central stalk (subunits gamma, delta, and epsilon) rotating inside the F1 region and a stationary peripheral stalk (subunits F6, b, d, and OSCP).

Its subcellular location is the mitochondrion membrane. In terms of biological role, subunit 8, of the mitochondrial membrane ATP synthase complex (F(1)F(0) ATP synthase or Complex V) that produces ATP from ADP in the presence of a proton gradient across the membrane which is generated by electron transport complexes of the respiratory chain. ATP synthase complex consist of a soluble F(1) head domain - the catalytic core - and a membrane F(1) domain - the membrane proton channel. These two domains are linked by a central stalk rotating inside the F(1) region and a stationary peripheral stalk. During catalysis, ATP synthesis in the catalytic domain of F(1) is coupled via a rotary mechanism of the central stalk subunits to proton translocation. In vivo, can only synthesize ATP although its ATP hydrolase activity can be activated artificially in vitro. Part of the complex F(0) domain. This is ATP synthase F(0) complex subunit 8 from Columbina passerina (Common ground-dove).